Here is a 302-residue protein sequence, read N- to C-terminus: Sulfate adenylyltransferase subunit 2 (302 aa).

It belongs to the PAPS reductase family. CysD subfamily. In terms of assembly, heterodimer composed of CysD, the smaller subunit, and CysN.

It carries out the reaction sulfate + ATP + H(+) = adenosine 5'-phosphosulfate + diphosphate. It functions in the pathway sulfur metabolism; hydrogen sulfide biosynthesis; sulfite from sulfate: step 1/3. Its function is as follows. With CysN forms the ATP sulfurylase (ATPS) that catalyzes the adenylation of sulfate producing adenosine 5'-phosphosulfate (APS) and diphosphate, the first enzymatic step in sulfur assimilation pathway. APS synthesis involves the formation of a high-energy phosphoric-sulfuric acid anhydride bond driven by GTP hydrolysis by CysN coupled to ATP hydrolysis by CysD. In Escherichia coli O7:K1 (strain IAI39 / ExPEC), this protein is Sulfate adenylyltransferase subunit 2.